The following is a 138-amino-acid chain: Holo-[acyl-carrier-protein] synthase (138 aa).

2 residues coordinate Mg(2+): aspartate 8 and glutamate 56.

Belongs to the P-Pant transferase superfamily. AcpS family. It depends on Mg(2+) as a cofactor.

The protein resides in the cytoplasm. The enzyme catalyses apo-[ACP] + CoA = holo-[ACP] + adenosine 3',5'-bisphosphate + H(+). Functionally, transfers the 4'-phosphopantetheine moiety from coenzyme A to a Ser of acyl-carrier-protein. The sequence is that of Holo-[acyl-carrier-protein] synthase from Clostridium novyi (strain NT).